A 229-amino-acid chain; its full sequence is Small ribosomal subunit protein uS3 (229 aa).

Residues 39–107 (VRQYLTEKLK…TAQINIAEIR (69 aa)) enclose the KH type-2 domain.

It belongs to the universal ribosomal protein uS3 family. As to quaternary structure, part of the 30S ribosomal subunit. Forms a tight complex with proteins S10 and S14.

Its function is as follows. Binds the lower part of the 30S subunit head. Binds mRNA in the 70S ribosome, positioning it for translation. This chain is Small ribosomal subunit protein uS3, found in Shewanella denitrificans (strain OS217 / ATCC BAA-1090 / DSM 15013).